Reading from the N-terminus, the 227-residue chain is Enolase-phosphatase E1 (227 aa).

Mg(2+) contacts are provided by aspartate 11 and glutamate 13. Residues serine 118–serine 119 and lysine 161 each bind substrate. Aspartate 186 lines the Mg(2+) pocket.

Belongs to the HAD-like hydrolase superfamily. MasA/MtnC family. In terms of assembly, monomer. The cofactor is Mg(2+).

It is found in the cytoplasm. It localises to the nucleus. The enzyme catalyses 5-methylsulfanyl-2,3-dioxopentyl phosphate + H2O = 1,2-dihydroxy-5-(methylsulfanyl)pent-1-en-3-one + phosphate. It participates in amino-acid biosynthesis; L-methionine biosynthesis via salvage pathway; L-methionine from S-methyl-5-thio-alpha-D-ribose 1-phosphate: step 3/6. It functions in the pathway amino-acid biosynthesis; L-methionine biosynthesis via salvage pathway; L-methionine from S-methyl-5-thio-alpha-D-ribose 1-phosphate: step 4/6. Its function is as follows. Bifunctional enzyme that catalyzes the enolization of 2,3-diketo-5-methylthiopentyl-1-phosphate (DK-MTP-1-P) into the intermediate 2-hydroxy-3-keto-5-methylthiopentenyl-1-phosphate (HK-MTPenyl-1-P), which is then dephosphorylated to form the acireductone 1,2-dihydroxy-3-keto-5-methylthiopentene (DHK-MTPene). The sequence is that of Enolase-phosphatase E1 from Saccharomyces cerevisiae (strain YJM789) (Baker's yeast).